The chain runs to 410 residues: Inositol hexakisphosphate kinase 3 (410 aa).

P211–G219 contributes to the substrate binding site. Residues Q333 to G358 are disordered.

Belongs to the inositol phosphokinase (IPK) family. Detected in brain.

The protein localises to the cytoplasm. The enzyme catalyses 1D-myo-inositol hexakisphosphate + ATP = 5-diphospho-1D-myo-inositol 1,2,3,4,6-pentakisphosphate + ADP. It carries out the reaction 1-diphospho-1D-myo-inositol 2,3,4,5,6-pentakisphosphate + ATP + H(+) = 1,5-bis(diphospho)-1D-myo-inositol 2,3,4,6-tetrakisphosphate + ADP. In terms of biological role, converts inositol hexakisphosphate (InsP6) to diphosphoinositol pentakisphosphate (InsP7/PP-InsP5). Converts 1,3,4,5,6-pentakisphosphate (InsP5) to PP-InsP4. The sequence is that of Inositol hexakisphosphate kinase 3 (IP6K3) from Homo sapiens (Human).